The following is a 182-amino-acid chain: Ribosome-recycling factor (182 aa).

Residues 136–158 form a disordered region; sequence IKKQEKEGDLSEDQSRDEQDQVQ.

It belongs to the RRF family.

The protein localises to the cytoplasm. In terms of biological role, responsible for the release of ribosomes from messenger RNA at the termination of protein biosynthesis. May increase the efficiency of translation by recycling ribosomes from one round of translation to another. This chain is Ribosome-recycling factor, found in Synechococcus sp. (strain CC9311).